We begin with the raw amino-acid sequence, 828 residues long: Periplasmic nitrate reductase (828 aa).

Positions 1 to 31 (MKLSRRSFMKANAVAAAAAAAGLSVPGVARA) form a signal peptide, tat-type signal. In terms of domain architecture, 4Fe-4S Mo/W bis-MGD-type spans 39-95 (IKWDKAPCRFCGTGCGVLVGTQQGRIVACQGDPDAPVNRGLNCIKGYFLPKIMYGKD). [4Fe-4S] cluster is bound by residues cysteine 46, cysteine 49, cysteine 53, and cysteine 81. Residues lysine 83, glutamine 150, asparagine 175, cysteine 179, 212 to 219 (WGSNMAEM), 243 to 247 (STFQH), 262 to 264 (QSD), methionine 372, glutamine 376, asparagine 482, 508 to 509 (SD), lysine 531, aspartate 558, and 718 to 727 (TGRVLEHWHT) each bind Mo-bis(molybdopterin guanine dinucleotide). Phenylalanine 794 is a binding site for substrate. Residues asparagine 802 and lysine 819 each coordinate Mo-bis(molybdopterin guanine dinucleotide).

Belongs to the prokaryotic molybdopterin-containing oxidoreductase family. NasA/NapA/NarB subfamily. In terms of assembly, component of the periplasmic nitrate reductase NapAB complex composed of NapA and NapB. It depends on [4Fe-4S] cluster as a cofactor. The cofactor is Mo-bis(molybdopterin guanine dinucleotide). Post-translationally, predicted to be exported by the Tat system. The position of the signal peptide cleavage has not been experimentally proven.

The protein localises to the periplasm. The catalysed reaction is 2 Fe(II)-[cytochrome] + nitrate + 2 H(+) = 2 Fe(III)-[cytochrome] + nitrite + H2O. Functionally, catalytic subunit of the periplasmic nitrate reductase complex NapAB. Receives electrons from NapB and catalyzes the reduction of nitrate to nitrite. The sequence is that of Periplasmic nitrate reductase from Citrobacter koseri (strain ATCC BAA-895 / CDC 4225-83 / SGSC4696).